Here is a 406-residue protein sequence, read N- to C-terminus: L-methionine gamma-lyase (406 aa).

Residues 76-78 and 106-107 contribute to the pyridoxal 5'-phosphate site; these read YQR and GM. Position 132 (Y132) interacts with L-homocysteine. 219–221 lines the pyridoxal 5'-phosphate pocket; that stretch reads SAT. N6-(pyridoxal phosphate)lysine is present on K222. Residue R380 coordinates L-homocysteine. R380 contributes to the L-methionine binding site.

The protein belongs to the trans-sulfuration enzymes family. L-methionine gamma-lyase subfamily. In terms of assembly, homotetramer. Pyridoxal 5'-phosphate serves as cofactor.

It carries out the reaction L-methionine + H2O = methanethiol + 2-oxobutanoate + NH4(+). The enzyme catalyses L-homocysteine + H2O = 2-oxobutanoate + hydrogen sulfide + NH4(+) + H(+). Its activity is regulated as follows. Is inhibited in vitro by carbonyl reagents, completely inactivated by DL-propargylglycine, and unaffected by metal-chelating agents. Catalyzes the alpha,gamma-elimination of L-methionine to produce methanethiol, 2-oxobutanoate and ammonia. May be responsible for the production of methanethiol associated with desirable Cheddar-type sulfur notes during cheese ripening. Is also able to catalyze the alpha,gamma-elimination of L-homocysteine and DL-selenomethionine, but has no activity toward L-cysteine, L-cystathionine, S-adenosyl-L-homocysteine and D-methionine. In Brevibacterium aurantiacum, this protein is L-methionine gamma-lyase.